The primary structure comprises 428 residues: Enolase (428 aa).

Position 163 (Q163) interacts with (2R)-2-phosphoglycerate. E205 serves as the catalytic Proton donor. Residues D242, E286, and D313 each contribute to the Mg(2+) site. The (2R)-2-phosphoglycerate site is built by K338, R367, S368, and K389. K338 functions as the Proton acceptor in the catalytic mechanism.

This sequence belongs to the enolase family. Mg(2+) serves as cofactor.

It localises to the cytoplasm. It is found in the secreted. Its subcellular location is the cell surface. The enzyme catalyses (2R)-2-phosphoglycerate = phosphoenolpyruvate + H2O. It functions in the pathway carbohydrate degradation; glycolysis; pyruvate from D-glyceraldehyde 3-phosphate: step 4/5. Functionally, catalyzes the reversible conversion of 2-phosphoglycerate (2-PG) into phosphoenolpyruvate (PEP). It is essential for the degradation of carbohydrates via glycolysis. This is Enolase from Bordetella avium (strain 197N).